Consider the following 130-residue polypeptide: Histone H2A type 2-A (130 aa).

The tract at residues 1–22 (MSGRGKQGGKARAKAKSRSSRA) is disordered. N-acetylserine is present on Ser-2. Ser-2 bears the Phosphoserine; by RPS6KA5 mark. Arg-4 carries the post-translational modification Citrulline; alternate. Arg-4 is subject to Symmetric dimethylarginine; by PRMT5; alternate. Lys-6 and Lys-10 each carry N6-(2-hydroxyisobutyryl)lysine; alternate. Residue Lys-6 is modified to N6-(beta-hydroxybutyryl)lysine; alternate. An N6-acetyllysine; alternate modification is found at Lys-6. Basic residues predominate over residues 7-19 (QGGKARAKAKSRS). The residue at position 10 (Lys-10) is an N6-lactoyllysine; alternate. Lys-10 bears the N6-succinyllysine; alternate mark. Residues Lys-14 and Lys-16 each participate in a glycyl lysine isopeptide (Lys-Gly) (interchain with G-Cter in ubiquitin) cross-link. At Lys-37 the chain carries N6-(2-hydroxyisobutyryl)lysine; alternate. Lys-37 carries the post-translational modification N6-(beta-hydroxybutyryl)lysine; alternate. Lys-37 bears the N6-crotonyllysine; alternate mark. An N6-(2-hydroxyisobutyryl)lysine mark is found at Lys-75 and Lys-76. Lys-96 bears the N6-(2-hydroxyisobutyryl)lysine; alternate mark. Lys-96 carries the post-translational modification N6-succinyllysine; alternate. Lys-96 bears the N6-glutaryllysine; alternate mark. An N6-glutaryllysine modification is found at Lys-100. Gln-105 carries the N5-methylglutamine modification. An N6-(2-hydroxyisobutyryl)lysine; alternate modification is found at Lys-119. N6-crotonyllysine; alternate is present on residues Lys-119 and Lys-120. Residues Lys-119 and Lys-120 each carry the N6-glutaryllysine; alternate modification. Lys-120 is subject to N6-(beta-hydroxybutyryl)lysine; alternate. Lys-120 is covalently cross-linked (Glycyl lysine isopeptide (Lys-Gly) (interchain with G-Cter in ubiquitin); alternate). The residue at position 121 (Thr-121) is a Phosphothreonine; by DCAF1. Lys-126 bears the N6-(beta-hydroxybutyryl)lysine; alternate mark. At Lys-126 the chain carries N6-crotonyllysine; alternate. Lys-126 bears the N6-glutaryllysine; alternate mark.

The protein belongs to the histone H2A family. The nucleosome is a histone octamer containing two molecules each of H2A, H2B, H3 and H4 assembled in one H3-H4 heterotetramer and two H2A-H2B heterodimers. The octamer wraps approximately 147 bp of DNA. In terms of processing, deiminated on Arg-4 in granulocytes upon calcium entry. Monoubiquitination of Lys-120 (H2AK119Ub) by RING1, TRIM37 and RNF2/RING2 complex gives a specific tag for epigenetic transcriptional repression and participates in X chromosome inactivation of female mammals. It is involved in the initiation of both imprinted and random X inactivation. Ubiquitinated H2A is enriched in inactive X chromosome chromatin. Ubiquitination of H2A functions downstream of methylation of 'Lys-27' of histone H3 (H3K27me). H2AK119Ub by RNF2/RING2 can also be induced by ultraviolet and may be involved in DNA repair. Following DNA double-strand breaks (DSBs), it is ubiquitinated through 'Lys-63' linkage of ubiquitin moieties by the E2 ligase UBE2N and the E3 ligases RNF8 and RNF168, leading to the recruitment of repair proteins to sites of DNA damage. Ubiquitination at Lys-14 and Lys-16 (H2AK13Ub and H2AK15Ub, respectively) in response to DNA damage is initiated by RNF168 that mediates monoubiquitination at these 2 sites, and 'Lys-63'-linked ubiquitin are then conjugated to monoubiquitin; RNF8 is able to extend 'Lys-63'-linked ubiquitin chains in vitro. H2AK119Ub and ionizing radiation-induced 'Lys-63'-linked ubiquitination (H2AK13Ub and H2AK15Ub) are distinct events. Post-translationally, phosphorylation on Ser-2 (H2AS1ph) is enhanced during mitosis. Phosphorylation on Ser-2 by RPS6KA5/MSK1 directly represses transcription. Acetylation of H3 inhibits Ser-2 phosphorylation by RPS6KA5/MSK1. Phosphorylation at Thr-121 (H2AT120ph) by DCAF1 is present in the regulatory region of many tumor suppresor genes and down-regulates their transcription. In terms of processing, symmetric dimethylation on Arg-4 by the PRDM1/PRMT5 complex may play a crucial role in the germ-cell lineage. Glutamine methylation at Gln-105 (H2AQ104me) by FBL is specifically dedicated to polymerase I. It is present at 35S ribosomal DNA locus and impairs binding of the FACT complex. Post-translationally, crotonylation (Kcr) is specifically present in male germ cells and marks testis-specific genes in post-meiotic cells, including X-linked genes that escape sex chromosome inactivation in haploid cells. Crotonylation marks active promoters and enhancers and confers resistance to transcriptional repressors. It is also associated with post-meiotically activated genes on autosomes. In terms of processing, hydroxybutyrylation of histones is induced by starvation. Lactylated in macrophages by EP300/P300 by using lactoyl-CoA directly derived from endogenous or exogenous lactate, leading to stimulates gene transcription.

Its subcellular location is the nucleus. It is found in the chromosome. In terms of biological role, core component of nucleosome. Nucleosomes wrap and compact DNA into chromatin, limiting DNA accessibility to the cellular machineries which require DNA as a template. Histones thereby play a central role in transcription regulation, DNA repair, DNA replication and chromosomal stability. DNA accessibility is regulated via a complex set of post-translational modifications of histones, also called histone code, and nucleosome remodeling. The chain is Histone H2A type 2-A (Hist2h2aa1) from Mus musculus (Mouse).